Reading from the N-terminus, the 448-residue chain is UDP-N-acetylmuramoylalanine--D-glutamate ligase (448 aa).

116 to 122 (GSNAKST) contacts ATP.

This sequence belongs to the MurCDEF family.

Its subcellular location is the cytoplasm. It carries out the reaction UDP-N-acetyl-alpha-D-muramoyl-L-alanine + D-glutamate + ATP = UDP-N-acetyl-alpha-D-muramoyl-L-alanyl-D-glutamate + ADP + phosphate + H(+). It functions in the pathway cell wall biogenesis; peptidoglycan biosynthesis. Its function is as follows. Cell wall formation. Catalyzes the addition of glutamate to the nucleotide precursor UDP-N-acetylmuramoyl-L-alanine (UMA). The chain is UDP-N-acetylmuramoylalanine--D-glutamate ligase from Pseudomonas syringae pv. tomato (strain ATCC BAA-871 / DC3000).